Here is a 306-residue protein sequence, read N- to C-terminus: Homoserine kinase (306 aa).

Residue 95-105 (PQSRGLGSSAA) participates in ATP binding.

The protein belongs to the GHMP kinase family. Homoserine kinase subfamily.

The protein localises to the cytoplasm. The catalysed reaction is L-homoserine + ATP = O-phospho-L-homoserine + ADP + H(+). Its pathway is amino-acid biosynthesis; L-threonine biosynthesis; L-threonine from L-aspartate: step 4/5. Catalyzes the ATP-dependent phosphorylation of L-homoserine to L-homoserine phosphate. The polypeptide is Homoserine kinase (Corynebacterium urealyticum (strain ATCC 43042 / DSM 7109)).